Reading from the N-terminus, the 736-residue chain is Catalase-peroxidase (736 aa).

A cross-link (tryptophyl-tyrosyl-methioninium (Trp-Tyr) (with M-249)) is located at residues 100–223 (WHSAGTYRIG…LAAVQMGLIY (124 aa)). Residue His101 is the Proton acceptor of the active site. A cross-link (tryptophyl-tyrosyl-methioninium (Tyr-Met) (with W-100)) is located at residues 223–249 (YVNPEGPDGKPDPVAAARDIRETFRRM). His264 is a binding site for heme b.

This sequence belongs to the peroxidase family. Peroxidase/catalase subfamily. Homodimer or homotetramer. It depends on heme b as a cofactor. In terms of processing, formation of the three residue Trp-Tyr-Met cross-link is important for the catalase, but not the peroxidase activity of the enzyme.

The catalysed reaction is H2O2 + AH2 = A + 2 H2O. It carries out the reaction 2 H2O2 = O2 + 2 H2O. Functionally, bifunctional enzyme with both catalase and broad-spectrum peroxidase activity. This is Catalase-peroxidase from Geobacillus kaustophilus (strain HTA426).